We begin with the raw amino-acid sequence, 276 residues long: MESTIGIDAGGTLTKIAYLNEKKKLTFEKFYSNEQDKIIDWLKKQTSIKQICITGGKAKQLQQLLSDSYKIVELNEFEATLVGVRYILKEEKYDINNFVLTNIGTGTSIHYIYNDRYIRAGGTGVGGGTIMGLSKLLTNIDHFEDVIPLTKVGSRKGLDITVGDIYGGILSPIDNSLTASNFGKAATIESNYNNSDILATVQGLVGEVVTALSLQFAETKNIDHIIYIGSTLCNNIHLQNIISSYTKYQNKTPIFLRDGGNSGAIGALLYATNKKS.

Position 8-15 (aspartate 8–lysine 15) interacts with ATP. Glutamate 76 acts as the Proton acceptor in catalysis. ATP contacts are provided by residues threonine 105, glycine 127 to methionine 131, phenylalanine 143, and serine 230.

This sequence belongs to the type II pantothenate kinase family. As to quaternary structure, homodimer.

The protein resides in the cytoplasm. The enzyme catalyses (R)-pantothenate + ATP = (R)-4'-phosphopantothenate + ADP + H(+). It participates in cofactor biosynthesis; coenzyme A biosynthesis; CoA from (R)-pantothenate: step 1/5. Functionally, catalyzes the phosphorylation of pantothenate (Pan), the first step in CoA biosynthesis. The sequence is that of Type II pantothenate kinase from Bacillus cereus (strain ZK / E33L).